We begin with the raw amino-acid sequence, 82 residues long: uncharacterized protein (82 aa).

Helical transmembrane passes span 8–28 (LTTA…LPAP) and 50–70 (LYTL…YFVL).

It is found in the cell membrane. This is an uncharacterized protein from Escherichia coli (strain K12).